A 90-amino-acid chain; its full sequence is RNA-binding protein Hfq (90 aa).

One can recognise a Sm domain in the interval 9–69; that stretch reads DRFLNHLRVN…ISTIIPSSYV (61 aa).

Belongs to the Hfq family. In terms of assembly, homohexamer.

In terms of biological role, RNA chaperone that binds small regulatory RNA (sRNAs) and mRNAs to facilitate mRNA translational regulation in response to envelope stress, environmental stress and changes in metabolite concentrations. Also binds with high specificity to tRNAs. The protein is RNA-binding protein Hfq of Thermotoga petrophila (strain ATCC BAA-488 / DSM 13995 / JCM 10881 / RKU-1).